The chain runs to 498 residues: Glycerol kinase (498 aa).

T12 contributes to the ADP binding site. ATP contacts are provided by T12, T13, and S14. T12 contacts sn-glycerol 3-phosphate. Residue R16 participates in ADP binding. R82, E83, and Y134 together coordinate sn-glycerol 3-phosphate. Glycerol contacts are provided by R82, E83, and Y134. The residue at position 230 (H230) is a Phosphohistidine; by HPr. D244 serves as a coordination point for sn-glycerol 3-phosphate. D244 and Q245 together coordinate glycerol. ADP-binding residues include T266 and G309. T266, G309, Q313, and G410 together coordinate ATP. Residues G410 and N414 each contribute to the ADP site.

It belongs to the FGGY kinase family. Homotetramer and homodimer (in equilibrium). The phosphoenolpyruvate-dependent sugar phosphotransferase system (PTS), including enzyme I, and histidine-containing protein (HPr) are required for the phosphorylation, which leads to the activation of the enzyme.

The catalysed reaction is glycerol + ATP = sn-glycerol 3-phosphate + ADP + H(+). It participates in polyol metabolism; glycerol degradation via glycerol kinase pathway; sn-glycerol 3-phosphate from glycerol: step 1/1. With respect to regulation, activated by phosphorylation and inhibited by fructose 1,6-bisphosphate (FBP). In terms of biological role, key enzyme in the regulation of glycerol uptake and metabolism. Catalyzes the phosphorylation of glycerol to yield sn-glycerol 3-phosphate. The chain is Glycerol kinase from Staphylococcus aureus (strain bovine RF122 / ET3-1).